The sequence spans 680 residues: Enzymatic polyprotein (680 aa).

A protease region spans residues 41-131; that stretch reads LHCFVDTGAS…LYEPFIQFTD (91 aa). Residue aspartate 46 is part of the active site. The 181-residue stretch at 273 to 453 folds into the Reverse transcriptase domain; sequence LKVIKPSKSP…KKINFLGLEI (181 aa).

This sequence belongs to the caulimoviridae enzymatic polyprotein family.

The catalysed reaction is DNA(n) + a 2'-deoxyribonucleoside 5'-triphosphate = DNA(n+1) + diphosphate. Functionally, encodes for at least two polypeptides: protease (PR) and reverse transcriptase (RT). The protease processes the polyprotein in cis. Reverse transcriptase is multifunctional enzyme that converts the viral RNA genome into dsDNA in viral cytoplasmic capsids. This enzyme displays a DNA polymerase activity that can copy either DNA or RNA templates, and a ribonuclease H (RNase H) activity that cleaves the RNA strand of RNA-DNA heteroduplexes in a partially processive 3'- to 5'-endonucleasic mode. Neo-synthesized pregenomic RNA (pgRNA) are encapsidated, and reverse-transcribed inside the nucleocapsid. Partial (+)DNA is synthesized from the (-)DNA template and generates the relaxed circular DNA (RC-DNA) genome. After budding and infection, the RC-DNA migrates in the nucleus, and is converted into a plasmid-like covalently closed circular DNA (cccDNA). This Cauliflower mosaic virus (strain NY8153) (CaMV) protein is Enzymatic polyprotein.